The following is a 311-amino-acid chain: Salutaridine reductase (311 aa).

Residue 17–40 participates in NADP(+) binding; that stretch reads VTGGNKGIGFEICKQLSSSGIMVV. Ser-180 is a substrate binding site. Tyr-236 functions as the Proton acceptor in the catalytic mechanism.

The protein belongs to the short-chain dehydrogenases/reductases (SDR) family.

It catalyses the reaction (7S)-salutaridinol + NADP(+) = salutaridine + NADPH + H(+). Its activity is regulated as follows. Subject to substrate inhibition at salutaridine concentrations higher than 20 to 30 uM. Functionally, involved in biosynthesis of morphinan-type benzylisoquinoline alkaloids. Catalyzes the stereospecific conversion of salutaridine to salutaridinol. The sequence is that of Salutaridine reductase from Papaver bracteatum (Great scarlet poppy).